A 158-amino-acid chain; its full sequence is NAD(P)H-quinone oxidoreductase subunit J, chloroplastic (158 aa).

This sequence belongs to the complex I 30 kDa subunit family. In terms of assembly, NDH is composed of at least 16 different subunits, 5 of which are encoded in the nucleus.

Its subcellular location is the plastid. It localises to the chloroplast thylakoid membrane. It catalyses the reaction a plastoquinone + NADH + (n+1) H(+)(in) = a plastoquinol + NAD(+) + n H(+)(out). The enzyme catalyses a plastoquinone + NADPH + (n+1) H(+)(in) = a plastoquinol + NADP(+) + n H(+)(out). In terms of biological role, NDH shuttles electrons from NAD(P)H:plastoquinone, via FMN and iron-sulfur (Fe-S) centers, to quinones in the photosynthetic chain and possibly in a chloroplast respiratory chain. The immediate electron acceptor for the enzyme in this species is believed to be plastoquinone. Couples the redox reaction to proton translocation, and thus conserves the redox energy in a proton gradient. The protein is NAD(P)H-quinone oxidoreductase subunit J, chloroplastic of Psilotum nudum (Whisk fern).